A 655-amino-acid polypeptide reads, in one-letter code: Protein movement modulator (655 aa).

Residues 1-54 (MEQPSILVKILHSIPHVNYTFRRVNDTFNPDSDVYLEPTNNKLQCQQKGIELQS) are Extracellular-facing. N-linked (GlcNAc...) asparagine glycosylation is found at asparagine 18 and asparagine 25. A helical transmembrane segment spans residues 55–75 (LVILASIPAGLLIGSLLGLLL). The Cytoplasmic segment spans residues 76 to 95 (YLLTRCCDRRQRKPSAQRCQ). Residues 96–116 (SCSLVIITLMTCAAIGLGLYG) traverse the membrane as a helical segment. The Extracellular segment spans residues 117–231 (NDDFHNGLLQ…GEFYESIRWP (115 aa)). N-linked (GlcNAc...) asparagine glycans are attached at residues asparagine 171, asparagine 188, and asparagine 211. Residues 232 to 252 (ATLAFLTVLLLLCTVLVIGVA) traverse the membrane as a helical segment. Over 253–258 (RRSRCT) the chain is Cytoplasmic. The helical transmembrane segment at 259–279 (LIFFSVSGLFCIIICWLLAGV) threads the bilayer. Residues 280 to 401 (YLASSVAAGD…ALRGLCGGGL (122 aa)) lie on the Extracellular side of the membrane. N-linked (GlcNAc...) asparagine glycans are attached at residues asparagine 326 and asparagine 372. A helical membrane pass occupies residues 402–422 (LGLSLMMVAGLLTSFLLTILV). Residues 423–655 (YADSHAWIYL…CKTLESNDFY (233 aa)) lie on the Cytoplasmic side of the membrane. The segment at 446-576 (APLFPASNAP…NNHYNNTQHR (131 aa)) is disordered. Residues 450 to 464 (PASNAPSASISPTAP) show a composition bias toward low complexity. Positions 465 to 480 (LSTGTINRTLLHHQQA) are enriched in polar residues. Over residues 482–509 (SGGGSGTLPGSGGGAGAGGGVGANGHNG) the composition is skewed to gly residues. Low complexity-rich tracts occupy residues 526-539 (SPSSQSSHTSSTAT) and 546-576 (SYHNSHQQHNNHLYSNHYSHSNNHYNNTQHR). 2 positions are modified to phosphoserine: serine 597 and serine 599.

It belongs to the tweety family.

It localises to the cell membrane. It catalyses the reaction chloride(in) = chloride(out). Its function is as follows. Probable large-conductance Ca(2+)-activated chloride channel. Modulator of embryonic movement. The protein is Protein movement modulator of Drosophila melanogaster (Fruit fly).